Consider the following 192-residue polypeptide: UPF0312 protein PC1_2518 (192 aa).

The first 23 residues, 1–23 (MLKKTLLSLTAVSMLASAGSALA), serve as a signal peptide directing secretion.

This sequence belongs to the UPF0312 family. Type 1 subfamily.

The protein resides in the periplasm. The protein is UPF0312 protein PC1_2518 of Pectobacterium carotovorum subsp. carotovorum (strain PC1).